The following is a 109-amino-acid chain: Nucleoid-associated protein Cvib_1034 (109 aa).

Belongs to the YbaB/EbfC family. Homodimer.

It is found in the cytoplasm. Its subcellular location is the nucleoid. Binds to DNA and alters its conformation. May be involved in regulation of gene expression, nucleoid organization and DNA protection. This Chlorobium phaeovibrioides (strain DSM 265 / 1930) (Prosthecochloris vibrioformis (strain DSM 265)) protein is Nucleoid-associated protein Cvib_1034.